Here is a 211-residue protein sequence, read N- to C-terminus: MASNTAPKNVVTINQKLVLLGDSAVGKSSLVLRFVKDQFDDYRESTIGAAFLTQTLPIDENTSVKLEIWDTAGQERYKSLAPMYYRNANCAIVVYDITQAASLEKAKSWIKELQRQAPEGIVIALAGNKLDLAQERRAVEKADAEAYAAEANLLFFETSAKTAENVNELFTAIAKKLPLEDKLNQARGAVNRGVNLSEARPAAQPSGSCSC.

21–28 (GDSAVGKS) serves as a coordination point for GTP. Residues 43–51 (RESTIGAAF) carry the Effector region motif. GTP is bound by residues 70-74 (DTAGQ) and 128-131 (NKLD). S-geranylgeranyl cysteine attachment occurs at residues cysteine 209 and cysteine 211. At cysteine 211 the chain carries Cysteine methyl ester.

The protein belongs to the small GTPase superfamily. Rab family.

Its subcellular location is the cell membrane. In terms of biological role, protein transport. Probably involved in vesicular traffic. This is GTP-binding protein ypt5 (ypt5) from Schizosaccharomyces pombe (strain 972 / ATCC 24843) (Fission yeast).